A 202-amino-acid polypeptide reads, in one-letter code: Small ribosomal subunit protein uS4 (202 aa).

Residues 16–42 (GELPGLSRKNPRRAYPPGQHGQARKKR) are disordered. One can recognise an S4 RNA-binding domain in the interval 90–151 (MRLDNTVFRL…QERSRRLVEA (62 aa)).

Belongs to the universal ribosomal protein uS4 family. In terms of assembly, part of the 30S ribosomal subunit. Contacts protein S5. The interaction surface between S4 and S5 is involved in control of translational fidelity.

In terms of biological role, one of the primary rRNA binding proteins, it binds directly to 16S rRNA where it nucleates assembly of the body of the 30S subunit. Its function is as follows. With S5 and S12 plays an important role in translational accuracy. The protein is Small ribosomal subunit protein uS4 of Rippkaea orientalis (strain PCC 8801 / RF-1) (Cyanothece sp. (strain PCC 8801)).